We begin with the raw amino-acid sequence, 1363 residues long: DNA-directed RNA polymerase subunit beta (1363 aa).

The protein belongs to the RNA polymerase beta chain family. The RNAP catalytic core consists of 2 alpha, 1 beta, 1 beta' and 1 omega subunit. When a sigma factor is associated with the core the holoenzyme is formed, which can initiate transcription.

It catalyses the reaction RNA(n) + a ribonucleoside 5'-triphosphate = RNA(n+1) + diphosphate. Its function is as follows. DNA-dependent RNA polymerase catalyzes the transcription of DNA into RNA using the four ribonucleoside triphosphates as substrates. This chain is DNA-directed RNA polymerase subunit beta, found in Pelagibacter ubique (strain HTCC1062).